Consider the following 386-residue polypeptide: Mannitol-1-phosphate 5-dehydrogenase (386 aa).

NAD(+) is bound at residue 4 to 15 (AIHFGGGNIGRG). Lys-211 is an active-site residue.

This sequence belongs to the mannitol dehydrogenase family. In terms of assembly, monomer.

The catalysed reaction is D-mannitol 1-phosphate + NAD(+) = beta-D-fructose 6-phosphate + NADH + H(+). In terms of biological role, catalyzes the NAD(H)-dependent interconversion of D-fructose 6-phosphate and D-mannitol 1-phosphate in the mannitol metabolic pathway. This Emericella nidulans (strain FGSC A4 / ATCC 38163 / CBS 112.46 / NRRL 194 / M139) (Aspergillus nidulans) protein is Mannitol-1-phosphate 5-dehydrogenase (mpdA).